Reading from the N-terminus, the 776-residue chain is Intermediate filament protein ifp-1 (776 aa).

Residues 1–23 (MDSANARDCLLHLARAKLSERQD) are head. The 352-residue stretch at 20 to 371 (ERQDLVQLND…ELLDRSGDPR (352 aa)) folds into the IF rod domain. The segment at 24–55 (LVQLNDQFVDIIEHVHYMEAEHTALEHDYNLL) is coil 1A. A linker 1 region spans residues 56–69 (KSGVQSDSSGINEI). The segment at 70-207 (YNVEIRTVRS…EDNKKIIMNE (138 aa)) is coil 1B. Residues 208-224 (HKYFVRDRNADRHVFRD) form a linker 12 region. The coil 2 stretch occupies residues 225–620 (QLRKAIADIR…QRGPHHSSYH (396 aa)). Disordered regions lie at residues 453 to 473 (ASPI…DSRS) and 518 to 544 (NTTQ…SERR). Polar residues predominate over residues 518–536 (NTTQINNPYASRTPTSSVN). The segment at 621–768 (AATGSVSNSI…WFVYTSNTEI (148 aa)) is tail. Residues 653–764 (NFQRFTRWYK…EVKSWFVYTS (112 aa)) enclose the LTD domain.

The protein belongs to the intermediate filament family.

Its subcellular location is the cytoplasm. In terms of biological role, cytoplasmic intermediate filaments provide mechanical strength to cells. Not essential protein. The protein is Intermediate filament protein ifp-1 (ifp-1) of Caenorhabditis elegans.